Reading from the N-terminus, the 434-residue chain is Protein maelstrom homolog (434 aa).

The segment at residues 4 to 73 is a DNA-binding region (HMG box); that stretch reads RRASRNAYYF…AQGKDSGPSE (70 aa).

Belongs to the maelstrom family. Interacts with SMARCB1, SIN3B and DDX4. Interacts with piRNA-associated proteins TDRD1, PIWIL1 and PIWIL2. Interacts with Tex19.1 and, probably, Tex19.2. As to expression, testis-specific. Present in spermatocytes and round and early elongating spermatids.

It localises to the cytoplasm. Its subcellular location is the nucleus. Functionally, plays a central role during spermatogenesis by repressing transposable elements and preventing their mobilization, which is essential for the germline integrity. Acts via the piRNA metabolic process, which mediates the repression of transposable elements during meiosis by forming complexes composed of piRNAs and Piwi proteins and governs the methylation and subsequent repression of transposons. Its association with piP-bodies suggests a participation in the secondary piRNAs metabolic process. Required for the localization of germ-cell factors to the meiotic nuage. In Mus musculus (Mouse), this protein is Protein maelstrom homolog.